A 362-amino-acid polypeptide reads, in one-letter code: tRNA-specific 2-thiouridylase MnmA (362 aa).

Residues 13-20 (GLSGGVDS) and Met-39 contribute to the ATP site. An interaction with target base in tRNA region spans residues 99-101 (NPD). Residue Cys-104 is the Nucleophile of the active site. Cys-104 and Cys-200 are oxidised to a cystine. Gly-128 is an ATP binding site. An interaction with tRNA region spans residues 150 to 152 (KDQ). The active-site Cysteine persulfide intermediate is the Cys-200. The segment at 310 to 311 (RY) is interaction with tRNA.

The protein belongs to the MnmA/TRMU family.

The protein resides in the cytoplasm. The enzyme catalyses S-sulfanyl-L-cysteinyl-[protein] + uridine(34) in tRNA + AH2 + ATP = 2-thiouridine(34) in tRNA + L-cysteinyl-[protein] + A + AMP + diphosphate + H(+). Catalyzes the 2-thiolation of uridine at the wobble position (U34) of tRNA, leading to the formation of s(2)U34. This chain is tRNA-specific 2-thiouridylase MnmA, found in Vesicomyosocius okutanii subsp. Calyptogena okutanii (strain HA).